The chain runs to 602 residues: UvrABC system protein C (602 aa).

A GIY-YIG domain is found at 15 to 92 (DLPGSYQMKD…IQKYQPYYNI (78 aa)). One can recognise a UVR domain in the interval 197 to 232 (GKAKASLTAKMERAAKNLQFERAAEIRDQLHYIEQT).

The protein belongs to the UvrC family. As to quaternary structure, interacts with UvrB in an incision complex.

It localises to the cytoplasm. The UvrABC repair system catalyzes the recognition and processing of DNA lesions. UvrC both incises the 5' and 3' sides of the lesion. The N-terminal half is responsible for the 3' incision and the C-terminal half is responsible for the 5' incision. This is UvrABC system protein C from Lacticaseibacillus casei (strain BL23) (Lactobacillus casei).